A 1567-amino-acid polypeptide reads, in one-letter code: Ice nucleation protein (1567 aa).

The segment covering 130–185 (PAAEPSAPATQATSATLPTPATPSTQATPSTQSTQSTQSTEATQSTEATPVATVAA) has biased composition (low complexity). Disordered regions lie at residues 130–195 (PAAE…QQHD), 270–329 (YGST…KGSD), 356–378 (AGSE…GSDV), 449–474 (TQTS…GSDI), 502–529 (SESS…YGST), 594–620 (QTAG…DVTA), 642–668 (QTSG…DVTA), 689–716 (TQTS…DVTA), 738–764 (QTSG…DVTA), 785–810 (TQTS…GSDI), 833–860 (TQTS…DVTA), 929–959 (TQTS…AGYG), and 977–1004 (TQTS…DVTA). Residues 270 to 282 (YGSTQTAQEGSRL) show a composition bias toward polar residues. The segment covering 283–296 (TSGYGSTATSGSDS) has biased composition (low complexity). Composition is skewed to polar residues over residues 302–325 (YGST…QTAR), 356–373 (AGSE…QTAR), 449–469 (TQTS…QTAR), and 502–519 (SESS…AQQD). Residues 520 to 529 (SSLTTGYGST) show a composition bias toward low complexity. Polar residues-rich tracts occupy residues 594-613 (QTAG…QTAR), 642-661 (QTSG…QTAR), 689-709 (TQTS…QTAR), 738-757 (QTSG…QTAR), 785-805 (TQTS…QTAR), 833-853 (TQTS…QTAR), 929-949 (TQTS…QTAR), and 977-997 (TQTS…QTAR).

The protein belongs to the bacterial ice nucleation protein family.

It is found in the cell outer membrane. Its function is as follows. Ice nucleation proteins enable bacteria to nucleate crystallization in supercooled water. The protein is Ice nucleation protein (inaX) of Xanthomonas campestris pv. translucens.